We begin with the raw amino-acid sequence, 470 residues long: Uronate isomerase (470 aa).

Belongs to the metallo-dependent hydrolases superfamily. Uronate isomerase family.

The enzyme catalyses D-glucuronate = D-fructuronate. It carries out the reaction aldehydo-D-galacturonate = keto-D-tagaturonate. Its pathway is carbohydrate metabolism; pentose and glucuronate interconversion. This is Uronate isomerase from Escherichia fergusonii (strain ATCC 35469 / DSM 13698 / CCUG 18766 / IAM 14443 / JCM 21226 / LMG 7866 / NBRC 102419 / NCTC 12128 / CDC 0568-73).